The following is a 476-amino-acid chain: Siroheme synthase 1 (476 aa).

Residues 1–203 (MDYLPIFADL…GQTAEAQRQL (203 aa)) form a precorrin-2 dehydrogenase /sirohydrochlorin ferrochelatase region. NAD(+)-binding positions include 22–23 (EV) and 43–44 (QS). Phosphoserine is present on serine 128. The segment at 219 to 476 (GEIALVGAGP…VSRPAVVNLA (258 aa)) is uroporphyrinogen-III C-methyltransferase. Proline 228 serves as a coordination point for S-adenosyl-L-methionine. Aspartate 251 serves as the catalytic Proton acceptor. Lysine 273 acts as the Proton donor in catalysis. S-adenosyl-L-methionine-binding positions include 304–306 (GGD), isoleucine 309, 334–335 (TA), methionine 386, and glycine 415.

It in the N-terminal section; belongs to the precorrin-2 dehydrogenase / sirohydrochlorin ferrochelatase family. The protein in the C-terminal section; belongs to the precorrin methyltransferase family.

The enzyme catalyses uroporphyrinogen III + 2 S-adenosyl-L-methionine = precorrin-2 + 2 S-adenosyl-L-homocysteine + H(+). The catalysed reaction is precorrin-2 + NAD(+) = sirohydrochlorin + NADH + 2 H(+). It carries out the reaction siroheme + 2 H(+) = sirohydrochlorin + Fe(2+). It participates in cofactor biosynthesis; adenosylcobalamin biosynthesis; precorrin-2 from uroporphyrinogen III: step 1/1. The protein operates within cofactor biosynthesis; adenosylcobalamin biosynthesis; sirohydrochlorin from precorrin-2: step 1/1. It functions in the pathway porphyrin-containing compound metabolism; siroheme biosynthesis; precorrin-2 from uroporphyrinogen III: step 1/1. Its pathway is porphyrin-containing compound metabolism; siroheme biosynthesis; siroheme from sirohydrochlorin: step 1/1. It participates in porphyrin-containing compound metabolism; siroheme biosynthesis; sirohydrochlorin from precorrin-2: step 1/1. Multifunctional enzyme that catalyzes the SAM-dependent methylations of uroporphyrinogen III at position C-2 and C-7 to form precorrin-2 via precorrin-1. Then it catalyzes the NAD-dependent ring dehydrogenation of precorrin-2 to yield sirohydrochlorin. Finally, it catalyzes the ferrochelation of sirohydrochlorin to yield siroheme. The chain is Siroheme synthase 1 from Serratia proteamaculans (strain 568).